The primary structure comprises 275 residues: Galaxin-2 (275 aa).

A signal peptide spans 1-20; sequence MTRFTSIGLCAVLLFNVCSC.

Component of the acid-insoluble and acid-soluble organic matrix of the aragonitic skeleton (at protein level).

The protein resides in the secreted. This Acropora millepora (Staghorn coral) protein is Galaxin-2.